A 342-amino-acid chain; its full sequence is HPr kinase/phosphorylase (342 aa).

Catalysis depends on residues His-153 and Lys-174. Residue 168–175 participates in ATP binding; sequence GKSGLGKS. Mg(2+) is bound at residue Ser-175. Asp-192 acts as the Proton acceptor; for phosphorylation activity. Proton donor; for dephosphorylation activity in catalysis. Residues 217-226 form an important for the catalytic mechanism of both phosphorylation and dephosphorylation region; sequence MEIRGLGVVD. Residue Glu-218 coordinates Mg(2+). Residue Arg-259 is part of the active site. Residues 280 to 285 form an important for the catalytic mechanism of dephosphorylation region; sequence PIFPGK.

The protein belongs to the HPrK/P family. Homohexamer. It depends on Mg(2+) as a cofactor.

It catalyses the reaction [HPr protein]-L-serine + ATP = [HPr protein]-O-phospho-L-serine + ADP + H(+). It carries out the reaction [HPr protein]-O-phospho-L-serine + phosphate + H(+) = [HPr protein]-L-serine + diphosphate. Catalyzes the ATP- as well as the pyrophosphate-dependent phosphorylation of a specific serine residue in HPr, a phosphocarrier protein of the phosphoenolpyruvate-dependent sugar phosphotransferase system (PTS). HprK/P also catalyzes the pyrophosphate-producing, inorganic phosphate-dependent dephosphorylation (phosphorolysis) of seryl-phosphorylated HPr (P-Ser-HPr). The polypeptide is HPr kinase/phosphorylase (Chlorobaculum tepidum (strain ATCC 49652 / DSM 12025 / NBRC 103806 / TLS) (Chlorobium tepidum)).